Here is a 309-residue protein sequence, read N- to C-terminus: Taste receptor type 2 member 31 (309 aa).

Residues 1–2 (MI) lie on the Extracellular side of the membrane. A helical membrane pass occupies residues 3 to 23 (TFLPTIFSILVVVIFVIGNFG). Residues 24–55 (NGFIALVNSIEWVKRQKISFADQILTALAVSR) lie on the Cytoplasmic side of the membrane. A helical transmembrane segment spans residues 56–76 (VGLLWALLLNWYSTVFNPAFY). The Extracellular portion of the chain corresponds to 77–100 (SVGVRTTVYDVWTVTGHFSNWLAT). Residues 101 to 121 (SLSIFYLLKIANFSNLIFLHL) form a helical membrane-spanning segment. The Cytoplasmic segment spans residues 122-126 (KRRVK). Residues 127-147 (SVILVMLLGPLLFLACQLFVI) traverse the membrane as a helical segment. Topologically, residues 148 to 181 (NMKEILRTKEYEGNMTWKIKLRSAMYLSDATITT) are extracellular. N161 is a glycosylation site (N-linked (GlcNAc...) asparagine). Residues 182–202 (LANLVPFTLTLLSFLLLICSL) traverse the membrane as a helical segment. The Cytoplasmic segment spans residues 203–229 (CKHLNKMQLHGKGSQDPSTKVHIKVLQ). A helical transmembrane segment spans residues 230–250 (TVISFLLLCAIYFLSIMISVW). Residues 251–259 (SFGSLENKP) lie on the Extracellular side of the membrane. Residues 260–280 (VFMFCKAIRFSYPSIHPFILI) traverse the membrane as a helical segment. Topologically, residues 281-309 (WGNKKLKQTFLSVLRQVRYWVKGEKPSSP) are cytoplasmic.

The protein belongs to the G-protein coupled receptor T2R family.

It localises to the membrane. Receptor that may play a role in the perception of bitterness and is gustducin-linked. May play a role in sensing the chemical composition of the gastrointestinal content. The activity of this receptor may stimulate alpha gustducin, mediate PLC-beta-2 activation and lead to the gating of TRPM5. This chain is Taste receptor type 2 member 31 (TAS2R31), found in Pongo pygmaeus (Bornean orangutan).